Reading from the N-terminus, the 177-residue chain is Large ribosomal subunit protein uL6 (177 aa).

This sequence belongs to the universal ribosomal protein uL6 family. In terms of assembly, part of the 50S ribosomal subunit.

Its function is as follows. This protein binds to the 23S rRNA, and is important in its secondary structure. It is located near the subunit interface in the base of the L7/L12 stalk, and near the tRNA binding site of the peptidyltransferase center. The protein is Large ribosomal subunit protein uL6 of Actinobacillus succinogenes (strain ATCC 55618 / DSM 22257 / CCUG 43843 / 130Z).